Here is a 488-residue protein sequence, read N- to C-terminus: UDP-N-acetylmuramoyl-L-alanyl-D-glutamate--2,6-diaminopimelate ligase (488 aa).

Residues Leu24, Ser26, and 41–43 (HQV) each bind UDP-N-acetyl-alpha-D-muramoyl-L-alanyl-D-glutamate. 113–119 (GTNGKTT) is a binding site for ATP. UDP-N-acetyl-alpha-D-muramoyl-L-alanyl-D-glutamate contacts are provided by residues Asn154, 155-156 (TT), Ser182, Gln188, and Arg190. At Lys222 the chain carries N6-carboxylysine. Residues Arg386, 410–413 (DNPR), Gly461, and Glu465 contribute to the meso-2,6-diaminopimelate site. The short motif at 410 to 413 (DNPR) is the Meso-diaminopimelate recognition motif element.

It belongs to the MurCDEF family. MurE subfamily. Mg(2+) is required as a cofactor. In terms of processing, carboxylation is probably crucial for Mg(2+) binding and, consequently, for the gamma-phosphate positioning of ATP.

It localises to the cytoplasm. It catalyses the reaction UDP-N-acetyl-alpha-D-muramoyl-L-alanyl-D-glutamate + meso-2,6-diaminopimelate + ATP = UDP-N-acetyl-alpha-D-muramoyl-L-alanyl-gamma-D-glutamyl-meso-2,6-diaminopimelate + ADP + phosphate + H(+). It participates in cell wall biogenesis; peptidoglycan biosynthesis. Its function is as follows. Catalyzes the addition of meso-diaminopimelic acid to the nucleotide precursor UDP-N-acetylmuramoyl-L-alanyl-D-glutamate (UMAG) in the biosynthesis of bacterial cell-wall peptidoglycan. The sequence is that of UDP-N-acetylmuramoyl-L-alanyl-D-glutamate--2,6-diaminopimelate ligase from Haemophilus influenzae (strain ATCC 51907 / DSM 11121 / KW20 / Rd).